The chain runs to 353 residues: uncharacterized protein (353 aa).

Residues 1-23 (MSAGKGLLLVICLLFLPLKSAMA) form the signal peptide.

It to E.coli YqiI.

May be involved in a fimbrial system chaperoned by YbgP and exported by YbgQ. This is an uncharacterized protein from Escherichia coli (strain K12).